Consider the following 88-residue polypeptide: Large ribosomal subunit protein eL31 (88 aa).

Belongs to the eukaryotic ribosomal protein eL31 family.

This Sulfurisphaera tokodaii (strain DSM 16993 / JCM 10545 / NBRC 100140 / 7) (Sulfolobus tokodaii) protein is Large ribosomal subunit protein eL31 (rpl31e).